A 327-amino-acid polypeptide reads, in one-letter code: Probable NAD(P)H-dependent D-xylose reductase xyl1 (327 aa).

The Proton donor role is filled by Tyr-57. Substrate is bound at residue His-119. NAD(+) contacts are provided by residues 173–174 (SN), 222–231 (SSLGPQSFIE), and 278–288 (KSNNPDRLAQN).

It belongs to the aldo/keto reductase family.

It catalyses the reaction xylitol + NAD(+) = D-xylose + NADH + H(+). The catalysed reaction is xylitol + NADP(+) = D-xylose + NADPH + H(+). It functions in the pathway carbohydrate metabolism; D-xylose degradation. Its function is as follows. Catalyzes the initial reaction in the xylose utilization pathway by reducing D-xylose into xylitol. Xylose is a major component of hemicelluloses such as xylan. Most fungi utilize D-xylose via three enzymatic reactions, xylose reductase (XR), xylitol dehydrogenase (XDH), and xylulokinase, to form xylulose 5-phosphate, which enters pentose phosphate pathway. In Arthroderma otae (strain ATCC MYA-4605 / CBS 113480) (Microsporum canis), this protein is Probable NAD(P)H-dependent D-xylose reductase xyl1 (xyl1).